The chain runs to 580 residues: Alpha-glucosidase (580 aa).

Residues 1–19 (MRPLGALSLFALLATTVSG) form the signal peptide. N102 and N127 each carry an N-linked (GlcNAc...) asparagine glycan. D224 acts as the Nucleophile in catalysis. E290 (proton donor) is an active-site residue. An N-linked (GlcNAc...) asparagine glycan is attached at N501. A helical transmembrane segment spans residues 560–580 (AAAINLSIGLLLAIMARYIFV).

Belongs to the glycosyl hydrolase 13 family. In terms of assembly, (Microbial infection) Binds to L.sphaericus BinB subunit of the binary toxin BinAB. As to expression, in 4th-instar larvae produced in the brush border membranes of the gastric caeca and the posterior stomach cells (at protein level).

It localises to the membrane. The enzyme catalyses Hydrolysis of terminal, non-reducing (1-&gt;4)-linked alpha-D-glucose residues with release of alpha-D-glucose.. Its function is as follows. Probably an alpha-glucosidase, it has no alpha-amylase function. Functionally, (Microbial infection) Serves as the larval receptor for Lysinibacillus sphaericus BinB toxin. The sequence is that of Alpha-glucosidase from Culex pipiens (House mosquito).